Reading from the N-terminus, the 196-residue chain is MKELQERIVQDGKVLSASVLKVDAFLNHQVDPQLTMKIGQRFAELFAGENITKVVTIEASGIHFAMATSFALGVPFIYAKKKKAVTLTEEVYSAPVHSFTRQETYQISVSRQYLSKEDRVLIVDDFLATGAALVGLTNIVKDAGAHLVGVGAVIEKSFQEGRGLLEQAGVRIESLARIESMSPEGIHFIEEEPARV.

2 residues coordinate xanthine: L20 and N27. Residue 128–132 (ATGAA) coordinates 5-phospho-alpha-D-ribose 1-diphosphate. K156 contributes to the xanthine binding site.

The protein belongs to the purine/pyrimidine phosphoribosyltransferase family. Xpt subfamily. Homodimer.

It is found in the cytoplasm. The enzyme catalyses XMP + diphosphate = xanthine + 5-phospho-alpha-D-ribose 1-diphosphate. It participates in purine metabolism; XMP biosynthesis via salvage pathway; XMP from xanthine: step 1/1. Converts the preformed base xanthine, a product of nucleic acid breakdown, to xanthosine 5'-monophosphate (XMP), so it can be reused for RNA or DNA synthesis. This Brevibacillus brevis (strain 47 / JCM 6285 / NBRC 100599) protein is Xanthine phosphoribosyltransferase.